Here is a 480-residue protein sequence, read N- to C-terminus: Proline--tRNA ligase (480 aa).

It belongs to the class-II aminoacyl-tRNA synthetase family. ProS type 3 subfamily. As to quaternary structure, homodimer.

Its subcellular location is the cytoplasm. It catalyses the reaction tRNA(Pro) + L-proline + ATP = L-prolyl-tRNA(Pro) + AMP + diphosphate. In terms of biological role, catalyzes the attachment of proline to tRNA(Pro) in a two-step reaction: proline is first activated by ATP to form Pro-AMP and then transferred to the acceptor end of tRNA(Pro). The polypeptide is Proline--tRNA ligase (Alkaliphilus oremlandii (strain OhILAs) (Clostridium oremlandii (strain OhILAs))).